A 196-amino-acid polypeptide reads, in one-letter code: Transcriptional regulatory protein UhpA (196 aa).

A Response regulatory domain is found at 3–116; that stretch reads TVALIDDHLI…ELIAAVHTVA (114 aa). At Asp-54 the chain carries 4-aspartylphosphate. The 66-residue stretch at 131-196 folds into the HTH luxR-type domain; that stretch reads AAGRQDPLTK…ELAHRMFDGW (66 aa). The segment at residues 155–174 is a DNA-binding region (H-T-H motif); it reads VKEIAAELGLSPKTVHVHRA.

Post-translationally, phosphorylated and dephosphorylated by UhpB.

The protein localises to the cytoplasm. In terms of biological role, part of the UhpABC signaling cascade that controls the expression of the hexose phosphate transporter UhpT. Activates the transcription of the uhpT gene. Acts by binding specifically to the uhpT promoter region. The polypeptide is Transcriptional regulatory protein UhpA (uhpA) (Salmonella typhimurium (strain LT2 / SGSC1412 / ATCC 700720)).